The primary structure comprises 76 residues: Omega/kappa-hexatoxin-Ar1g (76 aa).

The first 22 residues, 1 to 22, serve as a signal peptide directing secretion; sequence MNTATGFIVLLVLATVLGGIEA. A propeptide spanning residues 23-35 is cleaved from the precursor; it reads GESHMRKDAMGRV. Disulfide bonds link Cys-40/Cys-55, Cys-47/Cys-60, and Cys-54/Cys-74.

This sequence belongs to the neurotoxin 08 (Shiva) family. 02 (omega/kappa toxin) subfamily. As to expression, expressed by the venom gland.

The protein resides in the secreted. Functionally, toxin that may inhibit ion channels. This is Omega/kappa-hexatoxin-Ar1g from Atrax robustus (Sydney funnel-web spider).